A 349-amino-acid chain; its full sequence is Holliday junction branch migration complex subunit RuvB (349 aa).

Residues 1–185 (MSQEKERLIS…FGSIFRLDFY (185 aa)) form a large ATPase domain (RuvB-L) region. ATP-binding positions include Leu-24, Arg-25, Gly-66, Lys-69, Thr-70, Thr-71, 132–134 (EDY), Arg-175, Tyr-185, and Arg-222. Thr-70 is a Mg(2+) binding site. The interval 186–256 (DEEAIHDIVR…IAAESLACLE (71 aa)) is small ATPAse domain (RuvB-S). The tract at residues 259–349 (KLGLDEIDHK…QQGLWTENGS (91 aa)) is head domain (RuvB-H). Residues Arg-314 and Arg-319 each coordinate DNA.

This sequence belongs to the RuvB family. In terms of assembly, homohexamer. Forms an RuvA(8)-RuvB(12)-Holliday junction (HJ) complex. HJ DNA is sandwiched between 2 RuvA tetramers; dsDNA enters through RuvA and exits via RuvB. An RuvB hexamer assembles on each DNA strand where it exits the tetramer. Each RuvB hexamer is contacted by two RuvA subunits (via domain III) on 2 adjacent RuvB subunits; this complex drives branch migration. In the full resolvosome a probable DNA-RuvA(4)-RuvB(12)-RuvC(2) complex forms which resolves the HJ.

It is found in the cytoplasm. It catalyses the reaction ATP + H2O = ADP + phosphate + H(+). Functionally, the RuvA-RuvB-RuvC complex processes Holliday junction (HJ) DNA during genetic recombination and DNA repair, while the RuvA-RuvB complex plays an important role in the rescue of blocked DNA replication forks via replication fork reversal (RFR). RuvA specifically binds to HJ cruciform DNA, conferring on it an open structure. The RuvB hexamer acts as an ATP-dependent pump, pulling dsDNA into and through the RuvAB complex. RuvB forms 2 homohexamers on either side of HJ DNA bound by 1 or 2 RuvA tetramers; 4 subunits per hexamer contact DNA at a time. Coordinated motions by a converter formed by DNA-disengaged RuvB subunits stimulates ATP hydrolysis and nucleotide exchange. Immobilization of the converter enables RuvB to convert the ATP-contained energy into a lever motion, pulling 2 nucleotides of DNA out of the RuvA tetramer per ATP hydrolyzed, thus driving DNA branch migration. The RuvB motors rotate together with the DNA substrate, which together with the progressing nucleotide cycle form the mechanistic basis for DNA recombination by continuous HJ branch migration. Branch migration allows RuvC to scan DNA until it finds its consensus sequence, where it cleaves and resolves cruciform DNA. The chain is Holliday junction branch migration complex subunit RuvB from Dehalococcoides mccartyi (strain CBDB1).